Consider the following 574-residue polypeptide: Cytochrome P450 306a1 (574 aa).

Residues 303 to 314 show a composition bias toward basic and acidic residues; the sequence is EKEQLRQSKEAD. Residues 303-333 are disordered; sequence EKEQLRQSKEADPSQEQSEADEDDEESDEED. The segment covering 320 to 333 has biased composition (acidic residues); it reads SEADEDDEESDEED. Heme is bound at residue C505.

It belongs to the cytochrome P450 family. It depends on heme as a cofactor. In terms of tissue distribution, first seen at the early (syncytial) blastoderm stage 4. During cellularization of the blastoderm (stage 5), stripes of expression appear and remain through to stage 10. Expression becomes undetectable during germ band retraction (stages 11-14). By stage 15, some expression resumes in the primordium of the ring gland, so that by stage 17 strong expression is seen, but only in the ring gland. This specific localization continues throughout the larval instars (at protein level). Expressed in the prothoracic gland cells of the larval ring gland (RG). Levels decline just after the molt to the third instar then increase later during the wandering stage. Low levels of expression are seen in the larval brain and fat body. In the adult, majority of expression is restricted to the ovaries, with low levels in the head and carcass of both sexes.

It localises to the endoplasmic reticulum membrane. The protein localises to the microsome membrane. It catalyses the reaction 2,22,25-trideoxyecdysone + 2 reduced [adrenodoxin] + O2 + 2 H(+) = 2,22-dideoxyecdysone + 2 oxidized [adrenodoxin] + H2O. It participates in steroid biosynthesis; ecdysteroid biosynthesis. Its function is as follows. Involved in the metabolism of insect hormones; responsible for ecdysteroid C25-hydroxylase activity. May be involved in the breakdown of synthetic insecticides. This is Cytochrome P450 306a1 from Drosophila melanogaster (Fruit fly).